We begin with the raw amino-acid sequence, 227 residues long: Claudin-15 (227 aa).

Position 1 (Met-1) is a topological domain, cytoplasmic. A helical membrane pass occupies residues 2-24 (SVAVETFGFFMSALGLLMLGLTL). Over 25–74 (SNSYWRVSTVHGNVITTNTIFENLWYSCATDSLGVSNCWDFPSMLALSGY) the chain is Extracellular. Cys-52 and Cys-62 are disulfide-bonded. Residues 75-99 (VQGCRALMITAILLGFLGLFLGMVG) traverse the membrane as a helical segment. The Cytoplasmic portion of the chain corresponds to 100–115 (LRCTNVGNMDLSKKAK). Ser-111 is subject to Phosphoserine. A helical membrane pass occupies residues 116 to 140 (LLAIAGTLHILAGACGMVAISWYAV). Residues 141-159 (NITTDFFNPLYAGTKYELG) are Extracellular-facing. The interval 146–147 (FF) is important for the formation of tight-junction strand-like structures. A helical transmembrane segment spans residues 160-182 (PALYLGWSASLLSILGGICVFST). The Cytoplasmic portion of the chain corresponds to 183–227 (CCCSSKEEPATRAGLPYKPSTVVIPRATSDESDISFGKYGKNAYV). 3 positions are modified to phosphoserine: Ser-211, Ser-214, and Ser-217.

Belongs to the claudin family. Can form homo- and heteropolymeric tight junction strands. Post-translationally, palmitoylated when heterogeneously expressed in S.frugiperda cells. In terms of tissue distribution, detected in duodenum, jejunum and ileum. Detected on intestinal villi and crypts (at protein level). Ubiquitous. Detected in small and large intestine, colon, jejunum, heart, kidney and lung.

The protein localises to the cell junction. Its subcellular location is the tight junction. The protein resides in the cell membrane. It carries out the reaction Na(+)(in) = Na(+)(out). The enzyme catalyses K(+)(in) = K(+)(out). It catalyses the reaction Cs(+)(in) = Cs(+)(out). The catalysed reaction is Rb(+)(in) = Rb(+)(out). It carries out the reaction Li(+)(in) = Li(+)(out). The enzyme catalyses NH4(+)(in) = NH4(+)(out). It catalyses the reaction methylamine(out) = methylamine(in). The catalysed reaction is H2O(in) = H2O(out). Functionally, forms paracellular channels: polymerizes in tight junction strands with cation- and water-selective channels through the strands, conveying epithelial permeability in a process known as paracellular tight junction permeability. In intestinal epithelium, allows for sodium and water fluxes from the peritoneal side to the lumen of the intestine to regulate nutrient absorption and intestinal morphogenesis. In Mus musculus (Mouse), this protein is Claudin-15.